Here is a 261-residue protein sequence, read N- to C-terminus: Enolase-phosphatase E1 (261 aa).

Mg(2+) is bound by residues Asp16 and Glu18. Residues 153-154 and Lys187 contribute to the substrate site; that span reads SS. Position 212 (Asp212) interacts with Mg(2+).

The protein belongs to the HAD-like hydrolase superfamily. MasA/MtnC family. Monomer. Mg(2+) is required as a cofactor.

Its subcellular location is the cytoplasm. It localises to the nucleus. The catalysed reaction is 5-methylsulfanyl-2,3-dioxopentyl phosphate + H2O = 1,2-dihydroxy-5-(methylsulfanyl)pent-1-en-3-one + phosphate. The protein operates within amino-acid biosynthesis; L-methionine biosynthesis via salvage pathway; L-methionine from S-methyl-5-thio-alpha-D-ribose 1-phosphate: step 3/6. It functions in the pathway amino-acid biosynthesis; L-methionine biosynthesis via salvage pathway; L-methionine from S-methyl-5-thio-alpha-D-ribose 1-phosphate: step 4/6. Its function is as follows. Bifunctional enzyme that catalyzes the enolization of 2,3-diketo-5-methylthiopentyl-1-phosphate (DK-MTP-1-P) into the intermediate 2-hydroxy-3-keto-5-methylthiopentenyl-1-phosphate (HK-MTPenyl-1-P), which is then dephosphorylated to form the acireductone 1,2-dihydroxy-3-keto-5-methylthiopentene (DHK-MTPene). The sequence is that of Enolase-phosphatase E1 from Bos taurus (Bovine).